A 204-amino-acid chain; its full sequence is Probable carboxysome shell protein CsoS1E (204 aa).

Composition is skewed to low complexity over residues 1 to 14 (MPKP…DSPS), 41 to 84 (SAST…AAGS), and 92 to 102 (GGAIKPPASSS). Residues 1–102 (MPKPSSSSSS…GAIKPPASSS (102 aa)) form a disordered region. The region spanning 111–196 (ALGMIETRGM…PHQEVEPALR (86 aa)) is the BMC domain.

It belongs to the bacterial microcompartments protein family. As to quaternary structure, homohexamer.

The protein resides in the carboxysome. Its function is as follows. A probable carboxysomal shell protein found only in Prochlorococcus and Synechococcus strains that grow in low light. This Prochlorococcus marinus (strain MIT 9313) protein is Probable carboxysome shell protein CsoS1E.